Here is a 94-residue protein sequence, read N- to C-terminus: Cell division protein FtsB (94 aa).

Residues 1–3 (MRA) are Cytoplasmic-facing. A helical membrane pass occupies residues 4–21 (FAVLLIIALGWLQYTLWF). The Periplasmic segment spans residues 22 to 94 (GKNGMEDYAQ…YRIIDENSEE (73 aa)). Residues 40 to 60 (EEVNQGLRNRNGQMFAEIDDL) adopt a coiled-coil conformation.

Belongs to the FtsB family. As to quaternary structure, part of a complex composed of FtsB, FtsL and FtsQ.

The protein localises to the cell inner membrane. Essential cell division protein. May link together the upstream cell division proteins, which are predominantly cytoplasmic, with the downstream cell division proteins, which are predominantly periplasmic. The protein is Cell division protein FtsB of Aliivibrio salmonicida (strain LFI1238) (Vibrio salmonicida (strain LFI1238)).